Here is a 277-residue protein sequence, read N- to C-terminus: Proteasome subunit beta type-7 (277 aa).

Positions 1–43 (MAAVSVYAPPVGGFSFDNCRRNAVLEADFAKRGYKLPKVRKTG) are cleaved as a propeptide — removed in mature form. Thr-44 (nucleophile) is an active-site residue.

This sequence belongs to the peptidase T1B family. The 26S proteasome consists of a 20S proteasome core and two 19S regulatory subunits. The 20S proteasome core is a barrel-shaped complex made of 28 subunits that are arranged in four stacked rings. The two outer rings are each formed by seven alpha subunits, and the two inner rings are formed by seven beta subunits. The proteolytic activity is exerted by three beta-subunits PSMB5, PSMB6 and PSMB7. As to quaternary structure, (Microbial infection) Interacts with HIV-1 Tat protein. In terms of tissue distribution, expressed at a low level in colonic mucosa. Up-regulated in colorectal cancer tissues.

The protein localises to the cytoplasm. Its subcellular location is the nucleus. It catalyses the reaction Cleavage of peptide bonds with very broad specificity.. Its function is as follows. Component of the 20S core proteasome complex involved in the proteolytic degradation of most intracellular proteins. This complex plays numerous essential roles within the cell by associating with different regulatory particles. Associated with two 19S regulatory particles, forms the 26S proteasome and thus participates in the ATP-dependent degradation of ubiquitinated proteins. The 26S proteasome plays a key role in the maintenance of protein homeostasis by removing misfolded or damaged proteins that could impair cellular functions, and by removing proteins whose functions are no longer required. Associated with the PA200 or PA28, the 20S proteasome mediates ubiquitin-independent protein degradation. This type of proteolysis is required in several pathways including spermatogenesis (20S-PA200 complex) or generation of a subset of MHC class I-presented antigenic peptides (20S-PA28 complex). Within the 20S core complex, PSMB7 displays a trypsin-like activity. The protein is Proteasome subunit beta type-7 of Homo sapiens (Human).